Here is a 1620-residue protein sequence, read N- to C-terminus: ABC-type organic anion transporter ABCA8B (1620 aa).

A run of 7 helical transmembrane segments spans residues Ser30 to Gly50, Phe223 to Val243, Ser267 to Ile287, Phe298 to Leu318, Ser326 to Thr346, Leu352 to Met372, and Leu396 to Met416. An ABC transporter 1 domain is found at Ile479–Gln714. Gly515–Ser522 provides a ligand contact to ATP. Asn723 is a glycosylation site (N-linked (GlcNAc...) asparagine). The next 8 helical transmembrane spans lie at Thr860–Ile880, Cys979–Ala999, Thr1023–Thr1043, Met1069–Phe1089, Ile1105–Ile1125, Ile1135–Phe1155, Ile1164–Phe1184, and Val1194–Thr1214. The region spanning Leu1283–Lys1516 is the ABC transporter 2 domain. Gly1321–Ser1328 is an ATP binding site.

It belongs to the ABC transporter superfamily. ABCA family. As to expression, expressed in heart, brain, lung, liver and skeletal muscle. Highly expressed in the liver, and is also abundant in heart and skeletal muscle. Highly expressed in liver.

It localises to the cell membrane. The protein resides in the basolateral cell membrane. It catalyses the reaction taurocholate(in) + ATP + H2O = taurocholate(out) + ADP + phosphate + H(+). It carries out the reaction cholesterol(in) + ATP + H2O = cholesterol(out) + ADP + phosphate + H(+). Its activity is regulated as follows. Cholesterol efflux is increased by extracellularly applied taurocholate. Its function is as follows. Mediates cholesterol and taurocholate efflux. Through the interaction with ABCA1 potentiates the cholesterol efflux to lipid-free APOA1, in turn regulates high-density lipoprotein cholesterol levels. This Mus musculus (Mouse) protein is ABC-type organic anion transporter ABCA8B.